Consider the following 254-residue polypeptide: Adenosylcobinamide-GDP ribazoletransferase (254 aa).

Transmembrane regions (helical) follow at residues S27–A47, G50–L70, V104–L124, A131–A151, A170–L190, L194–L214, and L233–I253.

It belongs to the CobS family. Mg(2+) is required as a cofactor.

The protein resides in the cell inner membrane. It carries out the reaction alpha-ribazole + adenosylcob(III)inamide-GDP = adenosylcob(III)alamin + GMP + H(+). It catalyses the reaction alpha-ribazole 5'-phosphate + adenosylcob(III)inamide-GDP = adenosylcob(III)alamin 5'-phosphate + GMP + H(+). The protein operates within cofactor biosynthesis; adenosylcobalamin biosynthesis; adenosylcobalamin from cob(II)yrinate a,c-diamide: step 7/7. In terms of biological role, joins adenosylcobinamide-GDP and alpha-ribazole to generate adenosylcobalamin (Ado-cobalamin). Also synthesizes adenosylcobalamin 5'-phosphate from adenosylcobinamide-GDP and alpha-ribazole 5'-phosphate. The protein is Adenosylcobinamide-GDP ribazoletransferase of Chlorobaculum tepidum (strain ATCC 49652 / DSM 12025 / NBRC 103806 / TLS) (Chlorobium tepidum).